The following is a 149-amino-acid chain: Probable microsomal glutathione S-transferase (149 aa).

2 consecutive transmembrane segments (helical) span residues 7–27 and 123–143; these read SIFP…IGLW and LSHI…GSSL.

It belongs to the MAPEG family.

It localises to the membrane. The catalysed reaction is RX + glutathione = an S-substituted glutathione + a halide anion + H(+). May perform the conjugation of reduced glutathione to electrophiles. The chain is Probable microsomal glutathione S-transferase (mgst) from Dictyostelium discoideum (Social amoeba).